Reading from the N-terminus, the 306-residue chain is Agmatinase (306 aa).

H126, D149, H151, D153, D230, and D232 together coordinate Mn(2+).

The protein belongs to the arginase family. Agmatinase subfamily. Requires Mn(2+) as cofactor.

The catalysed reaction is agmatine + H2O = urea + putrescine. It participates in amine and polyamine biosynthesis; putrescine biosynthesis via agmatine pathway; putrescine from agmatine: step 1/1. In terms of biological role, catalyzes the formation of putrescine from agmatine. This chain is Agmatinase, found in Escherichia coli O1:K1 / APEC.